Consider the following 366-residue polypeptide: Galactoside alpha-(1,2)-fucosyltransferase 1 (366 aa).

Topologically, residues 1-8 are cytoplasmic; the sequence is MWPRSHRH. The helical; Signal-anchor for type II membrane protein transmembrane segment at 9-25 threads the bilayer; the sequence is LCLAFLLVCVLSAISFL. Residues 26–366 lie on the Lumenal side of the membrane; that stretch reads IHFHQDSIRH…LSPLWPLAEP (341 aa). Residues Asn66, Asn302, and Asn328 are each glycosylated (N-linked (GlcNAc...) asparagine).

Belongs to the glycosyltransferase 11 family.

The protein localises to the golgi apparatus. It localises to the golgi stack membrane. The enzyme catalyses a beta-D-galactosyl-(1-&gt;4)-N-acetyl-beta-D-glucosaminyl derivative + GDP-beta-L-fucose = an alpha-L-Fuc-(1-&gt;2)-beta-D-Gal-(1-&gt;4)-beta-D-GlcNAc derivative + GDP + H(+). It catalyses the reaction a ganglioside GA1 + GDP-beta-L-fucose = a ganglioside Fuc-GA1 + GDP + H(+). It carries out the reaction a beta-D-Gal-(1-&gt;3)-beta-D-GlcNAc-(1-&gt;3)-beta-D-Gal-(1-&gt;4)-beta-D-Glc-(1&lt;-&gt;1')-Cer(d18:1(4E)) + GDP-beta-L-fucose = alpha-L-fucosyl-(1-&gt;2)- beta-D-galactosyl-(1-&gt;3)-N-acetyl-beta-D-glucosaminyl-(1-&gt;3)-beta-D-galactosyl-(1-&gt;4)-beta-D-glucosyl-(1&lt;-&gt;1')-N-acylsphing-4-enine + GDP + H(+). The catalysed reaction is a neolactoside nLc4Cer(d18:1(4E)) + GDP-beta-L-fucose = a neolactoside IV(2)-alpha-Fuc-nLc4Cer(d18:1(4E)) + GDP + H(+). The enzyme catalyses a ganglioside GM1 + GDP-beta-L-fucose = a ganglioside Fuc-GM1 + GDP + H(+). It catalyses the reaction beta-D-galactosyl-(1-&gt;3)-N-acetyl-D-galactosamine + GDP-beta-L-fucose = alpha-L-fucosyl-(1-&gt;2)-beta-D-galactosyl-(1-&gt;3)-N-acetyl-D-galactosamine + GDP + H(+). Its pathway is protein modification; protein glycosylation. In terms of biological role, catalyzes the transfer of L-fucose, from a guanosine diphosphate-beta-L-fucose, to the terminal galactose residue of glycoconjugates through an alpha(1,2) linkage leading to H antigen synthesis that is an intermediate substrate in the synthesis of ABO blood group antigens. H antigen is essential for maturation of the glomerular layer of the main olfactory bulb, in cell migration and early cell-cell contacts during tumor associated angiogenesis. Preferentially fucosylates soluble lactose and to a lesser extent fucosylates glycolipids gangliosides GA1 and GM1a. This is Galactoside alpha-(1,2)-fucosyltransferase 1 from Saimiri sciureus (Common squirrel monkey).